The sequence spans 254 residues: MLTIADVEFESRLFTGTGKFSNSQVMLEAITASKSQLVTVAMKRIDFKMGLDDLLTPLRQAGVRLLPNTSGARNAKEAVFAAELAREMLGTHWIKLEIHPDPKYLMPDAIETLEAARILCEKGFIVLPYVHADPVLCRRLEEVGCAAVMPLASPIGSNQGLVTESFLKIIIEQARVPVVIDAGIGAPSQAARAMELGADAVLVNTAIASSASPIVMAECFKEAVQCGRRAFEAGLGRVQTGAVHTSPLTGFLNQ.

Residue K95 is the Schiff-base intermediate with DXP of the active site. 1-deoxy-D-xylulose 5-phosphate contacts are provided by residues G156, 182 to 183 (AG), and 204 to 205 (NT).

Belongs to the ThiG family. In terms of assembly, homotetramer. Forms heterodimers with either ThiH or ThiS.

It localises to the cytoplasm. It catalyses the reaction [ThiS sulfur-carrier protein]-C-terminal-Gly-aminoethanethioate + 2-iminoacetate + 1-deoxy-D-xylulose 5-phosphate = [ThiS sulfur-carrier protein]-C-terminal Gly-Gly + 2-[(2R,5Z)-2-carboxy-4-methylthiazol-5(2H)-ylidene]ethyl phosphate + 2 H2O + H(+). Its pathway is cofactor biosynthesis; thiamine diphosphate biosynthesis. In terms of biological role, catalyzes the rearrangement of 1-deoxy-D-xylulose 5-phosphate (DXP) to produce the thiazole phosphate moiety of thiamine. Sulfur is provided by the thiocarboxylate moiety of the carrier protein ThiS. In vitro, sulfur can be provided by H(2)S. This is Thiazole synthase from Shewanella baltica (strain OS223).